A 303-amino-acid polypeptide reads, in one-letter code: Sushi domain-containing protein 6 (303 aa).

A signal peptide spans 1 to 39; it reads MCHGRIAPKSTSVFAVASVGHGVFLPLVILCTLLGDGLA. Positions 40–104 constitute a Sushi domain; sequence SVCPLPPEPE…KPAMEISCRL (65 aa). Over 40–120 the chain is Extracellular; it reads SVCPLPPEPE…HTSLGVPTLS (81 aa). Cystine bridges form between C42–C89 and C74–C102. The helical transmembrane segment at 121–141 threads the bilayer; that stretch reads IVASTASSVALILLLVVLFVL. The Cytoplasmic portion of the chain corresponds to 142 to 303; it reads LQPKLKSFHH…TDDIPLLKEA (162 aa). 2 disordered regions span residues 199–237 and 263–282; these read VLSE…GQSG and GSGN…NSDI.

Its subcellular location is the membrane. May play a role in growth-suppressive activity and cell death. May be involved in the production of chemokine molecules in umbilical vein endothelial cells (HUVECs) cultured in THP1 monocyte LPS-induced medium. Plays a role in preventing tumor onset. This Homo sapiens (Human) protein is Sushi domain-containing protein 6.